Reading from the N-terminus, the 820-residue chain is Protein phosphatase 1 regulatory subunit 29 (820 aa).

The first 22 residues, M1–A22, serve as a signal peptide directing secretion. At D23–Y397 the chain is on the extracellular side. N54 is a glycosylation site (N-linked (GlcNAc...) asparagine). LRR repeat units lie at residues T56–R77, N80–G101, S104–G125, R128–E149, and S152–S173. 3 N-linked (GlcNAc...) asparagine glycosylation sites follow: N80, N85, and N117. Residues N185–N247 enclose the LRRCT domain. N205 and N247 each carry an N-linked (GlcNAc...) asparagine glycan. Residues L250 to S294 are disordered. The region spanning D292–T379 is the Fibronectin type-III domain. Residues I398–C418 form a helical membrane-spanning segment. Residues L419–L820 lie on the Cytoplasmic side of the membrane. Disordered stretches follow at residues G508–G527 and S589–H612. Residues S619, S668, and S672 each carry the phosphoserine modification. The segment at T654–L677 is disordered.

As to quaternary structure, interacts with PPP1CA.

The protein resides in the membrane. Functionally, inhibits phosphatase activity of protein phosphatase 1 (PP1) complexes. The chain is Protein phosphatase 1 regulatory subunit 29 (ELFN2) from Homo sapiens (Human).